The primary structure comprises 83 residues: Defensin-2 (83 aa).

The signal sequence occupies residues 1 to 33 (MAGKGVGTPLSALFLLVLLVVTIGMMEVQVAEG). 4 disulfides stabilise this stretch: Cys-36–Cys-82, Cys-47–Cys-67, Cys-53–Cys-76, and Cys-57–Cys-78.

It belongs to the DEFL family.

Its subcellular location is the secreted. Its function is as follows. Plant defense peptide. Has antifungal activity. This is Defensin-2 from Pinus sylvestris (Scotch pine).